A 247-amino-acid polypeptide reads, in one-letter code: Exosome complex component Rrp4 (247 aa).

The S1 motif domain maps to 70 to 143 (GDTVIGLIED…INPILSIKGK (74 aa)). The KH domain maps to 149-211 (SSGIVIDIPP…EALVEAIQII (63 aa)).

Belongs to the RRP4 family. In terms of assembly, component of the archaeal exosome complex. Forms a trimer of Rrp4 and/or Csl4 subunits. The trimer associates with a hexameric ring-like arrangement composed of 3 Rrp41-Rrp42 heterodimers.

The protein resides in the cytoplasm. In terms of biological role, non-catalytic component of the exosome, which is a complex involved in RNA degradation. Increases the RNA binding and the efficiency of RNA degradation. Confers strong poly(A) specificity to the exosome. The protein is Exosome complex component Rrp4 of Sulfurisphaera tokodaii (strain DSM 16993 / JCM 10545 / NBRC 100140 / 7) (Sulfolobus tokodaii).